We begin with the raw amino-acid sequence, 170 residues long: Adenine phosphoribosyltransferase (170 aa).

Belongs to the purine/pyrimidine phosphoribosyltransferase family. As to quaternary structure, homodimer.

The protein localises to the cytoplasm. The enzyme catalyses AMP + diphosphate = 5-phospho-alpha-D-ribose 1-diphosphate + adenine. It participates in purine metabolism; AMP biosynthesis via salvage pathway; AMP from adenine: step 1/1. Its function is as follows. Catalyzes a salvage reaction resulting in the formation of AMP, that is energically less costly than de novo synthesis. This Thermotoga sp. (strain RQ2) protein is Adenine phosphoribosyltransferase.